A 595-amino-acid chain; its full sequence is Actin-histidine N-methyltransferase (595 aa).

Positions M1–P22 are disordered. The segment covering Q10–V20 has biased composition (polar residues). Residues R75, E104–F106, R254, D275–H279, and S325–F327 contribute to the S-adenosyl-L-methionine site. The 221-residue stretch at E94–G314 folds into the SET domain. S513 carries the phosphoserine modification. Positions E549–Q572 are enriched in polar residues. The tract at residues E549–E595 is disordered. Over residues E573–K583 the composition is skewed to basic and acidic residues. Polar residues predominate over residues G584–E595.

Belongs to the class V-like SAM-binding methyltransferase superfamily. SETD3 actin-histidine methyltransferase family. In terms of assembly, interacts with MYOD1. Phosphorylated by GSK3B, which is required for recognition by the SCF(FBXW7) complex and subsequent degradation. In terms of processing, ubiquitinated by the SCF(FBXW7) complex following phosphorylation by GSK3B, leading to its degradation by the proteasome.

It is found in the cytoplasm. The protein localises to the nucleus. The enzyme catalyses L-histidyl-[protein] + S-adenosyl-L-methionine = N(tele)-methyl-L-histidyl-[protein] + S-adenosyl-L-homocysteine + H(+). In terms of biological role, protein-histidine N-methyltransferase that specifically mediates 3-methylhistidine (tele-methylhistidine) methylation of actin at 'His-73'. Histidine methylation of actin is required for smooth muscle contraction of the laboring uterus during delivery. Does not have protein-lysine N-methyltransferase activity and probably only catalyzes histidine methylation of actin. The protein is Actin-histidine N-methyltransferase of Papio anubis (Olive baboon).